A 1009-amino-acid polypeptide reads, in one-letter code: Ulvan lyase, long isoform (1009 aa).

The signal sequence occupies residues 1–32 (MTAQKSKYFNRIMTMNTLLFSLLTVGFSQAYA). 137 to 138 (SH) is a substrate binding site. Residue His138 is the Proton donor/acceptor of the active site. Positions 200, 210, and 212 each coordinate Ca(2+). Substrate-binding residues include Tyr291 and Arg308. Ca(2+)-binding residues include Asp311, Asp314, and Tyr316. Tyr372 is a substrate binding site.

This sequence belongs to the polysaccharide lyase 24 family.

Its function is as follows. Ulvan lyase involved in ulvan degradation. Ulvan is the main polysaccharide component of the Ulvales (green seaweed) cell wall. It is composed of disaccharide building blocks comprising 3-sulfated rhamnose (Rha3S) linked to D-glucuronic acid (GlcA), L-iduronic acid (IduA), or D-xylose (Xyl). Ulvan lyase catalyzes preferentially the endolytic cleavage of the glycosidic bond between Rha3S and the uronic acid GlcA, but not IduA, producing oligosaccharides that have unsaturated 4-deoxy-L-threo-hex-4-enopyranosiduronic acid (deltaUA) at the non-reducing end. The most abundant end products in the degradation of the ulvan polysaccharide were deltaUA-Rha3S disaccharides and deltaUA-Rha3S-IduA-Rha3S and deltaUA-Rha3S-Xyl-Rha3S tetrasaccharides. The polypeptide is Ulvan lyase, long isoform (ullA) (Glaciecola sp. (strain KUL10)).